The following is a 268-amino-acid chain: Interleukin-1 beta (268 aa).

The propeptide occupies 1 to 116; it reads MATVPELTSE…TWDDYSLECD (116 aa).

It belongs to the IL-1 family. As to quaternary structure, monomer. In its precursor form, weakly interacts with full-length MEFV; the mature cytokine does not interact at all. Interacts with integrins ITGAV:ITGBV and ITGA5:ITGB1; integrin-binding is required for IL1B signaling. Interacts with cargo receptor TMED10; the interaction is direct and is required for the secretion of IL1B mature form. Interacts with HSP90AB1; the interaction facilitates cargo translocation into the ERGIC. Interacts with HSP90B1; the interaction facilitates cargo translocation into the ERGIC.

It is found in the cytoplasm. The protein resides in the cytosol. Its subcellular location is the secreted. It localises to the lysosome. The protein localises to the extracellular exosome. In terms of biological role, potent pro-inflammatory cytokine. Initially discovered as the major endogenous pyrogen, induces prostaglandin synthesis, neutrophil influx and activation, T-cell activation and cytokine production, B-cell activation and antibody production, and fibroblast proliferation and collagen production. Promotes Th17 differentiation of T-cells. Synergizes with IL12/interleukin-12 to induce IFNG synthesis from T-helper 1 (Th1) cells. Plays a role in angiogenesis by inducing VEGF production synergistically with TNF and IL6. Involved in transduction of inflammation downstream of pyroptosis: its mature form is specifically released in the extracellular milieu by passing through the gasdermin-D (GSDMD) pore. This chain is Interleukin-1 beta (IL1B), found in Oryctolagus cuniculus (Rabbit).